A 289-amino-acid polypeptide reads, in one-letter code: Agroclavine dehydrogenase (289 aa).

The protein belongs to the fgaFS/easG family. As to quaternary structure, monomer.

It catalyses the reaction agroclavine + NADP(+) = didehydroagroclavine + NADPH + H(+). It functions in the pathway alkaloid biosynthesis; ergot alkaloid biosynthesis. Agroclavine dehydrogenase; part of the gene cluster that mediates the biosynthesis of fungal ergot alkaloid ergovaline, the predominant ergopeptine product in E.festucae var. lolii. DmaW catalyzes the first step of ergot alkaloid biosynthesis by condensing dimethylallyl diphosphate (DMAP) and tryptophan to form 4-dimethylallyl-L-tryptophan. The second step is catalyzed by the methyltransferase easF that methylates 4-dimethylallyl-L-tryptophan in the presence of S-adenosyl-L-methionine, resulting in the formation of 4-dimethylallyl-L-abrine. The catalase easC and the FAD-dependent oxidoreductase easE then transform 4-dimethylallyl-L-abrine to chanoclavine-I which is further oxidized by easD in the presence of NAD(+), resulting in the formation of chanoclavine-I aldehyde. Agroclavine dehydrogenase easG then mediates the conversion of chanoclavine-I aldehyde to agroclavine via a non-enzymatic adduct reaction: the substrate is an iminium intermediate that is formed spontaneously from chanoclavine-I aldehyde in the presence of glutathione. Further conversion of agroclavine to paspalic acid is a two-step process involving oxidation of agroclavine to elymoclavine and of elymoclavine to paspalic acid, the second step being performed by the elymoclavine oxidase cloA. However, cloA does not encode a functional enzyme indicating that C.fusiformis terminates its ergot alkaloid pathway at elymoclavine. The sequence is that of Agroclavine dehydrogenase from Claviceps fusiformis (Ergot fungus).